Consider the following 131-residue polypeptide: ATP synthase epsilon chain (131 aa).

It belongs to the ATPase epsilon chain family. As to quaternary structure, F-type ATPases have 2 components, CF(1) - the catalytic core - and CF(0) - the membrane proton channel. CF(1) has five subunits: alpha(3), beta(3), gamma(1), delta(1), epsilon(1). CF(0) has three main subunits: a, b and c.

Its subcellular location is the cell membrane. Produces ATP from ADP in the presence of a proton gradient across the membrane. This is ATP synthase epsilon chain from Clostridium novyi (strain NT).